Reading from the N-terminus, the 305-residue chain is Acetyl-coenzyme A carboxylase carboxyl transferase subunit beta (305 aa).

The CoA carboxyltransferase N-terminal domain maps to 25–294 (VWTKCDSCGQ…PGNDDVEIRS (270 aa)). Zn(2+) contacts are provided by Cys-29, Cys-32, Cys-48, and Cys-51. The segment at 29–51 (CDSCGQVLYRAELERNLGVCPKC) adopts a C4-type zinc-finger fold. A disordered region spans residues 281 to 305 (NHPEPGNDDVEIRSDAPSESSQDDA).

Belongs to the AccD/PCCB family. Acetyl-CoA carboxylase is a heterohexamer composed of biotin carboxyl carrier protein (AccB), biotin carboxylase (AccC) and two subunits each of ACCase subunit alpha (AccA) and ACCase subunit beta (AccD). Zn(2+) is required as a cofactor.

The protein resides in the cytoplasm. The enzyme catalyses N(6)-carboxybiotinyl-L-lysyl-[protein] + acetyl-CoA = N(6)-biotinyl-L-lysyl-[protein] + malonyl-CoA. It functions in the pathway lipid metabolism; malonyl-CoA biosynthesis; malonyl-CoA from acetyl-CoA: step 1/1. Component of the acetyl coenzyme A carboxylase (ACC) complex. Biotin carboxylase (BC) catalyzes the carboxylation of biotin on its carrier protein (BCCP) and then the CO(2) group is transferred by the transcarboxylase to acetyl-CoA to form malonyl-CoA. The protein is Acetyl-coenzyme A carboxylase carboxyl transferase subunit beta of Pectobacterium atrosepticum (strain SCRI 1043 / ATCC BAA-672) (Erwinia carotovora subsp. atroseptica).